The primary structure comprises 279 residues: Large ribosomal subunit protein uL2 (279 aa).

Disordered regions lie at residues 34-55 and 221-279; these read LAPL…RHKG and RGMA…RKAK. Over residues 40–55 the composition is skewed to basic residues; the sequence is SGGRNRAGRITSRHKG. A compositionally biased stretch (gly residues) spans 232 to 242; the sequence is MGGGEGRSKSG. A compositionally biased stretch (basic residues) spans 259–279; that stretch reads LKTRNKKKASSKLIVRGRKAK.

This sequence belongs to the universal ribosomal protein uL2 family. As to quaternary structure, part of the 50S ribosomal subunit. Forms a bridge to the 30S subunit in the 70S ribosome.

Functionally, one of the primary rRNA binding proteins. Required for association of the 30S and 50S subunits to form the 70S ribosome, for tRNA binding and peptide bond formation. It has been suggested to have peptidyltransferase activity; this is somewhat controversial. Makes several contacts with the 16S rRNA in the 70S ribosome. The chain is Large ribosomal subunit protein uL2 from Chlorobium phaeobacteroides (strain BS1).